Consider the following 310-residue polypeptide: TLC domain-containing protein 2 (310 aa).

The next 6 membrane-spanning stretches (helical) occupy residues 6-26 (LLVA…LQLL), 40-60 (NIFV…VGLW), 79-99 (VLVA…LWNQ), 117-137 (CLST…SLLL), 167-187 (ASLA…SLWL), and 194-214 (LSLA…SISI). A TLC domain is found at 33 to 227 (RDRWMWRNIF…IRILTKDILQ (195 aa)).

The protein belongs to the TLCD family.

It localises to the cell membrane. Its function is as follows. Regulates the composition and fluidity of the plasma membrane. Inhibits the incorporation of membrane-fluidizing phospholipids containing omega-3 long-chain polyunsaturated fatty acids (LCPUFA) and thereby promotes membrane rigidity. Does not appear to have any effect on LCPUFA synthesis. The chain is TLC domain-containing protein 2 (Tlcd2) from Mus musculus (Mouse).